A 501-amino-acid chain; its full sequence is MDFPGLIKKIKEDLENRLVEKSKQPAFTDYWLINKTISLLKEYPSGFSYPILINEIELACSERNKLDNVFSSLEWLTKSDAVIYLEDQFHFHCYDYYYTPIPSLKLKDSEENTCEMILHSSFYLLFHEPFNILKGSTLRFSQSRIHQKWYLRKQIRFLPTTSFVPVLQYAASKSFVKSMVESTEHEFFQIRDITISKSDQGVKRITVELGRIISLDKKGAFLIDNNTNFIHFSGTYHDFPKLLDKQQYLLIPFWSTVWEGSTNWQDGMIGILVILSENDFEEKKCDSWQVGRLAAVNSNFLVLDNNGQRVKILYSNSQKHYFKDTYIGDLLCISPINHSSDNLSDYSCVSDTTTEILSNLENPLSSNFLRNDLCKFSNLFSGVSGHLKIQPLTLVITGFVANLTRQSDLNTSLVLPEVNPLTAKMEVIDCLRNSFWAALRPNCVSYFASMISGFKELFQKEMEFPIYLDLKSYKLGFHWCDIYVDSEHNCHIQKINSLPCE.

As to quaternary structure, interacts with dna2, pcn1 and rfc1.

The protein resides in the nucleus. The protein localises to the cytoplasm. Functionally, has a role in the progression of DNA replication and in the maintenance of genomic integrity. Acts during S phase, after initiation, where it is essential for completion. The chain is Cell division control protein 24 (cdc24) from Schizosaccharomyces pombe (strain 972 / ATCC 24843) (Fission yeast).